A 90-amino-acid polypeptide reads, in one-letter code: Probable Fe(2+)-trafficking protein (90 aa).

This sequence belongs to the Fe(2+)-trafficking protein family.

Its function is as follows. Could be a mediator in iron transactions between iron acquisition and iron-requiring processes, such as synthesis and/or repair of Fe-S clusters in biosynthetic enzymes. The polypeptide is Probable Fe(2+)-trafficking protein (Stutzerimonas stutzeri (strain A1501) (Pseudomonas stutzeri)).